Consider the following 423-residue polypeptide: Putative UPF0496 protein 5 (423 aa).

Residues 1 to 14 (MGNRHGIMRPRRLA) show a composition bias toward basic residues. The segment at 1–37 (MGNRHGIMRPRRLASGRSAAEEEEDGEGEPGSYEAAC) is disordered. 2 helical membrane-spanning segments follow: residues 224-244 (IVFL…AAIA) and 247-267 (PVAA…GKWM).

Belongs to the UPF0496 family.

The protein resides in the membrane. In Oryza sativa subsp. japonica (Rice), this protein is Putative UPF0496 protein 5.